A 242-amino-acid polypeptide reads, in one-letter code: Probable transcriptional regulatory protein Bphyt_1301 (242 aa).

The protein belongs to the TACO1 family.

The protein resides in the cytoplasm. The protein is Probable transcriptional regulatory protein Bphyt_1301 of Paraburkholderia phytofirmans (strain DSM 17436 / LMG 22146 / PsJN) (Burkholderia phytofirmans).